Here is a 213-residue protein sequence, read N- to C-terminus: Viral dihydrofolate reductase (213 aa).

The region spanning 4-184 (LLNCIVAVDQ…IKYKFEVYEK (181 aa)) is the DHFR domain. Residues A10 and 16–22 (GIGKKGH) each bind NADP(+). 31–36 (DFKYFQ) is a substrate binding site. Residue 54 to 56 (KNT) coordinates NADP(+). Substrate is bound at residue R70. NADP(+)-binding positions include 76 to 78 (SKK) and 116 to 123 (GGSSVYKD).

It belongs to the dihydrofolate reductase family.

The catalysed reaction is (6S)-5,6,7,8-tetrahydrofolate + NADP(+) = 7,8-dihydrofolate + NADPH + H(+). It functions in the pathway cofactor biosynthesis; tetrahydrofolate biosynthesis; 5,6,7,8-tetrahydrofolate from 7,8-dihydrofolate: step 1/1. Key enzyme in folate metabolism. Catalyzes an essential reaction for de novo glycine and purine synthesis, and for DNA precursor synthesis. In Saimiri sciureus (Common squirrel monkey), this protein is Viral dihydrofolate reductase (DHFR).